The chain runs to 173 residues: N-alpha-acetyltransferase 20 (173 aa).

An N-acetyltransferase domain is found at 2-151 (TTIRRFVCDD…DALDMRKALP (150 aa)).

This sequence belongs to the acetyltransferase family. ARD1 subfamily.

Its function is as follows. Seems to be involved in N-acetylation. The chain is N-alpha-acetyltransferase 20 (nat5) from Dictyostelium discoideum (Social amoeba).